The chain runs to 56 residues: uncharacterized protein (56 aa).

A helical membrane pass occupies residues 6–26 (MLLIMLYMVLVVNDLILYNIL).

The protein localises to the membrane. This is an uncharacterized protein from Dictyostelium discoideum (Social amoeba).